Reading from the N-terminus, the 234-residue chain is Triosephosphate isomerase (234 aa).

A substrate-binding site is contributed by asparagine 8 to lysine 10. Histidine 90 serves as the catalytic Electrophile. Residue glutamate 159 is the Proton acceptor of the active site. 2 residues coordinate substrate: glycine 165 and serine 197.

The protein belongs to the triosephosphate isomerase family. In terms of assembly, homodimer.

It localises to the cytoplasm. The enzyme catalyses D-glyceraldehyde 3-phosphate = dihydroxyacetone phosphate. It functions in the pathway carbohydrate biosynthesis; gluconeogenesis. The protein operates within carbohydrate degradation; glycolysis; D-glyceraldehyde 3-phosphate from glycerone phosphate: step 1/1. Involved in the gluconeogenesis. Catalyzes stereospecifically the conversion of dihydroxyacetone phosphate (DHAP) to D-glyceraldehyde-3-phosphate (G3P). The chain is Triosephosphate isomerase from Helicobacter acinonychis (strain Sheeba).